A 628-amino-acid chain; its full sequence is Probable potassium transport system protein Kup (628 aa).

A run of 12 helical transmembrane segments spans residues 15–35 (LAIAAIGVVFGDIGTSPLYSL), 55–75 (VISLLFWAIVIVVGVKYVLFV), 104–124 (AGLLMMLGIFGACMFYGDAVI), 142–162 (PHLSHLVLPLTIVILILLFWI), 173–193 (LFGPIMVLWFVVLAALGLWHI), 210–230 (TFMAAHVLQAYVVLGSVVLVL), 252–272 (WYVLVMPSLVLNYFGQGALLM), 281–301 (PFFLLAPDWALLPLVVLSTIA), 342–362 (IYVPVVNWMLLFIILCIVIAF), 372–392 (YGIAVTATMVITTILACVVMV), 400–420 (LLVALIIGVFMTVDLGFFGAN), and 426–446 (EGGWLPLGIGALLFFLLMTWY).

The protein belongs to the HAK/KUP transporter (TC 2.A.72) family.

The protein resides in the cell inner membrane. The enzyme catalyses K(+)(in) + H(+)(in) = K(+)(out) + H(+)(out). Functionally, transport of potassium into the cell. Likely operates as a K(+):H(+) symporter. The chain is Probable potassium transport system protein Kup from Paraburkholderia xenovorans (strain LB400).